Consider the following 335-residue polypeptide: Homeobox protein DBX1 (335 aa).

Disordered stretches follow at residues 58 to 102 (IPAA…LSPA) and 240 to 335 (KERE…ITVS). The span at 83-95 (GSPGSGSRRGSSP) shows a compositional bias: low complexity. Residues 181 to 240 (GMLRRAVFSDVQRKALEKTFQKQKYISKPDRKKLASKLGLKDSQVKIWFQNRRMKWRNSK) constitute a DNA-binding region (homeobox). The span at 299-317 (GPLPASPAHSSSPGKPSDF) shows a compositional bias: low complexity. Over residues 318–335 (SDSDEDEEGEEDEEITVS) the composition is skewed to acidic residues.

This sequence belongs to the H2.0 homeobox family.

It is found in the nucleus. Functionally, could have a role in patterning the central nervous system during embryogenesis. Has a key role in regulating the distinct phenotypic features that distinguish two major classes of ventral interneurons, V0 and V1 neurons. Regulates the transcription factor profile, neurotransmitter phenotype, intraspinal migratory path and axonal trajectory of V0 neurons, features that differentiate them from an adjacent set of V1 neurons. In Mus musculus (Mouse), this protein is Homeobox protein DBX1 (Dbx1).